Consider the following 584-residue polypeptide: Alkaline nuclease (584 aa).

The segment at 409 to 430 is disordered; sequence GGGADHHLRGSPGDSPPPIPFE.

It belongs to the herpesviridae alkaline nuclease family. Interacts with major DNA-binding protein; this interaction increases the nuclease processivity of the alkaline exonuclease.

It localises to the host nucleus. Its subcellular location is the host cytoplasm. Its function is as follows. Plays a role in processing non linear or branched viral DNA intermediates in order to promote the production of mature packaged unit-length linear progeny viral DNA molecules. Exhibits endonuclease and exonuclease activities and accepts both double-stranded and single-stranded DNA as substrate. Exonuclease digestion of DNA is in the 5'-&gt; 3' direction and the products are 5'-monophosphate nucleosides. Additionally, forms a recombinase with the major DNA-binding protein, which displays strand exchange activity. In Human cytomegalovirus (strain AD169) (HHV-5), this protein is Alkaline nuclease (UL98).